A 254-amino-acid polypeptide reads, in one-letter code: SLA class II histocompatibility antigen, DQ haplotype C alpha chain (254 aa).

A signal peptide spans 1-23; it reads MVPGRVLMWGALALTTVMSACGG. The interval 24–120 is alpha-1; that stretch reads EDIAADHVAS…KVPEVTVFSK (97 aa). Over 24–216 the chain is Extracellular; it reads EDIAADHVAS…IPAPMSELTE (193 aa). N-linked (GlcNAc...) asparagine glycans are attached at residues Asn104 and Asn144. The region spanning 113–204 is the Ig-like C1-type domain; it reads PEVTVFSKSP…LDKPLLKHWE (92 aa). The tract at residues 121–203 is alpha-2; it reads SPVILGQPNT…GLDKPLLKHW (83 aa). Cys133 and Cys188 are disulfide-bonded. The interval 204–216 is connecting peptide; it reads EPEIPAPMSELTE. Residues 217 to 239 form a helical membrane-spanning segment; sequence TVVCALGLIVGLVGIVVGTVFII. Over 240–254 the chain is Cytoplasmic; the sequence is QGLRSGGPSRHQGSL.

The protein belongs to the MHC class II family.

It localises to the membrane. The chain is SLA class II histocompatibility antigen, DQ haplotype C alpha chain from Sus scrofa (Pig).